Reading from the N-terminus, the 703-residue chain is Prolyl 3-hydroxylase 2 (703 aa).

Positions 1-21 are cleaved as a signal peptide; it reads MRESTWVSLLLLLLLPTPQRG. Residues 17 to 40 are disordered; the sequence is TPQRGGPQDGRRSPEPEPERGPLQ. Residues 25–36 are compositionally biased toward basic and acidic residues; the sequence is DGRRSPEPEPER. TPR repeat units lie at residues 42–75, 144–177, 205–238, and 301–334; these read FDLL…HRRL, RVPY…NPEH, HLES…YFNE, and PLHY…HPDN. 2 N-linked (GlcNAc...) asparagine glycosylation sites follow: Asn-444 and Asn-544. Residues 552–666 form the Fe2OG dioxygenase domain; the sequence is THMVCRTALS…RCAVALWFTL (115 aa). Fe cation contacts are provided by His-575, Asp-577, and His-647. Arg-657 is a catalytic residue. A Prevents secretion from ER motif is present at residues 700 to 703; that stretch reads KDEL.

Belongs to the leprecan family. Requires Fe cation as cofactor. L-ascorbate serves as cofactor. Detected in kidney. Detected on kidney tubular cells, pancreas acinar cells, Schwann cells of the peripheral nerve in the pinna, and in tunica adventitia, the smooth muscle layer of the aortic wall (at protein level). Detected in lung, skeletal muscle and kidney. Detected in kidney glomeruli and in prehypertrophic regions of long bone from neonates. In the eye, detected in the epithelial layer of the cornea and at lower levels in the sclera at the posterior end of the eye.

The protein resides in the endoplasmic reticulum. The protein localises to the sarcoplasmic reticulum. It is found in the golgi apparatus. The catalysed reaction is L-prolyl-[collagen] + 2-oxoglutarate + O2 = trans-3-hydroxy-L-prolyl-[collagen] + succinate + CO2. Its function is as follows. Prolyl 3-hydroxylase that catalyzes the post-translational formation of 3-hydroxyproline on collagens. Contributes to proline 3-hydroxylation of collagen COL4A1 and COL1A1 in tendons, the eye sclera and in the eye lens capsule. Has high activity with the type IV collagen COL4A1, and lower activity with COL1A1. Catalyzes hydroxylation of the first Pro in Gly-Pro-Hyp sequences where Hyp is 4-hydroxyproline. Has no activity on substrates that have proline instead of 4-hydroxyproline in the third position. The polypeptide is Prolyl 3-hydroxylase 2 (Mus musculus (Mouse)).